The primary structure comprises 330 residues: Probable ADP,ATP carrier protein At5g56450 (330 aa).

Positions 1 to 10 (MCISKEDEED) are enriched in acidic residues. The interval 1 to 22 (MCISKEDEEDPSRNRRNQSPLS) is disordered. The next 6 helical transmembrane spans lie at 27 to 61 (LKHF…LQTQ), 103 to 127 (GSSV…RSIL), 137 to 171 (IFSG…RLAA), 203 to 230 (GLPA…EIFS), 236 to 270 (ELAL…IMMQ), and 300 to 325 (GALS…KRFL). Solcar repeat units follow at residues 28–126 (KHFQ…YRSI), 139–228 (SGAL…VKEI), and 241–324 (KRWG…VKRF). The ADP site is built by R108 and K120. An ADP-binding site is contributed by R264. Positions 264–269 (RRRIMM) match the Substrate recognition motif.

Belongs to the mitochondrial carrier (TC 2.A.29) family. As to quaternary structure, monomer.

Its subcellular location is the membrane. It catalyses the reaction ADP(in) + ATP(out) = ADP(out) + ATP(in). Its function is as follows. ADP:ATP antiporter that catalyzes the exchange of ADP and ATP across the membrane. In Arabidopsis thaliana (Mouse-ear cress), this protein is Probable ADP,ATP carrier protein At5g56450.